The following is a 328-amino-acid chain: Eukaryotic translation initiation factor 3 subunit I (328 aa).

WD repeat units lie at residues 8–47 (GHER…RLGT), 50–91 (GHQG…GTIP), 148–187 (SIQT…ELNS), 190–229 (DHTG…CLKT), and 287–328 (GHFG…FVFE).

The protein belongs to the eIF-3 subunit I family. In terms of assembly, component of the eukaryotic translation initiation factor 3 (eIF-3) complex.

It localises to the cytoplasm. In terms of biological role, component of the eukaryotic translation initiation factor 3 (eIF-3) complex, which is involved in protein synthesis of a specialized repertoire of mRNAs and, together with other initiation factors, stimulates binding of mRNA and methionyl-tRNAi to the 40S ribosome. The eIF-3 complex specifically targets and initiates translation of a subset of mRNAs involved in cell proliferation. The protein is Eukaryotic translation initiation factor 3 subunit I of Culex quinquefasciatus (Southern house mosquito).